Here is a 414-residue protein sequence, read N- to C-terminus: CinA-like protein (414 aa).

It belongs to the CinA family.

In Geobacter sp. (strain M21), this protein is CinA-like protein.